The following is a 109-amino-acid chain: MEVSAVLRGVHLSPQKARLVADLVRGKKVDQALNILAFTPKKGAEVIKKVVESAIANAEHNEGADIDELKVTSIYVDKGLVLKRIRARAKGRAGRIIKPTCHITVTVGN.

This sequence belongs to the universal ribosomal protein uL22 family. Part of the 50S ribosomal subunit.

Its function is as follows. This protein binds specifically to 23S rRNA; its binding is stimulated by other ribosomal proteins, e.g. L4, L17, and L20. It is important during the early stages of 50S assembly. It makes multiple contacts with different domains of the 23S rRNA in the assembled 50S subunit and ribosome. In terms of biological role, the globular domain of the protein is located near the polypeptide exit tunnel on the outside of the subunit, while an extended beta-hairpin is found that lines the wall of the exit tunnel in the center of the 70S ribosome. The polypeptide is Large ribosomal subunit protein uL22 (Methylobacillus flagellatus (strain ATCC 51484 / DSM 6875 / VKM B-1610 / KT)).